The primary structure comprises 679 residues: Pollen receptor-like kinase 4 (679 aa).

The first 39 residues, 1-39 (MLTWETPVMLASNTASTKKLAFITTFLIIVLCPVTMVMS), serve as a signal peptide directing secretion. LRR repeat units follow at residues 118–141 (IKNLRTLSFMNNKFNGSMPSVKNF), 142–165 (GALKSLYLSNNRFTGEIPADAFDG), 167–191 (HHLKKLLLANNAFRGSIPSSLAYLP), 193–217 (LLELRLNGNQFHGEIPYFKQKDLKL), and 234–257 (SNMDPVSFSGNKNLCGPPLSPCSS). Positions 252–269 (LSPCSSDSGSSPDLPSSP) are enriched in low complexity. The segment at 252–271 (LSPCSSDSGSSPDLPSSPTE) is disordered. Residues 278-298 (FFIIAIVLIVIGIILMIISLV) form a helical membrane-spanning segment. The interval 311-344 (SAYPSAGQDRTEKYNYDQSTDKDKAADSVTSYTS) is disordered. Over residues 319–336 (DRTEKYNYDQSTDKDKAA) the composition is skewed to basic and acidic residues. One can recognise a Protein kinase domain in the interval 372–646 (RASAEVLGSG…RDAVEKIERL (275 aa)). S374 carries the post-translational modification Phosphoserine. ATP contacts are provided by residues 378–386 (LGSGSFGSS) and K400. Phosphoserine occurs at positions 452 and 455. T472 bears the Phosphothreonine mark. Y542 is modified (phosphotyrosine).

The protein belongs to the protein kinase superfamily. Ser/Thr protein kinase family. As to quaternary structure, interacts in vitro with ROPGEF1 (via PRONE domain). Interacts weakly with the GRI peptide. In terms of tissue distribution, expressed in pollen and/or in flowers, but not in leaves.

It localises to the membrane. The enzyme catalyses L-seryl-[protein] + ATP = O-phospho-L-seryl-[protein] + ADP + H(+). It catalyses the reaction L-threonyl-[protein] + ATP = O-phospho-L-threonyl-[protein] + ADP + H(+). Its function is as follows. Receptor-like kinase involved in the control of pollen germination and pollen tube polar growth. Can phosphorylate ROPGEF1 in vitro. The polypeptide is Pollen receptor-like kinase 4 (Arabidopsis thaliana (Mouse-ear cress)).